The following is a 72-amino-acid chain: Neuropeptide IMFamide (72 aa).

A signal peptide spans 1–24 (MMRFTIGVVCLVAVLLSLAEVSEA). The residue at position 36 (phenylalanine 36) is a Phenylalanine amide. Residues 40–72 (GPTEYDQRGKTFTALCEIATEACQAWFPSTENK) constitute a propeptide that is removed on maturation.

Expressed in corpora cardiaca (CC), corpora allata (CA), antennal lobe (AL) and gnathal ganglion (GNG) (at protein level). Expression detected in only a few animals (at protein level).

It is found in the secreted. In Agrotis ipsilon (Black cutworm moth), this protein is Neuropeptide IMFamide.